Here is a 58-residue protein sequence, read N- to C-terminus: Large ribosomal subunit protein eL24 (58 aa).

Residues cysteine 6, cysteine 9, cysteine 32, and cysteine 36 each contribute to the Zn(2+) site. The C4-type zinc finger occupies 6–36 (CSFCGAEIPPGYGIMYVRNDGTIQRYCSRKC).

This sequence belongs to the eukaryotic ribosomal protein eL24 family. As to quaternary structure, part of the 50S ribosomal subunit. Forms a cluster with proteins L3 and L14. Zn(2+) is required as a cofactor.

In terms of biological role, binds to the 23S rRNA. This chain is Large ribosomal subunit protein eL24, found in Pyrobaculum neutrophilum (strain DSM 2338 / JCM 9278 / NBRC 100436 / V24Sta) (Thermoproteus neutrophilus).